The following is a 350-amino-acid chain: NADH-cytochrome b5 reductase 2 (350 aa).

Residues 43 to 63 (PLVLALGGVAGIGAWYGLGGF) traverse the membrane as a helical segment. Residues 96–204 (DQFVEFTLKE…KGPIAKFAYK (109 aa)) form the FAD-binding FR-type domain. 207-242 (EFESIGMIAGGSGITPMYQVIQDIASNPSDKTKVTL) contacts FAD.

The protein belongs to the flavoprotein pyridine nucleotide cytochrome reductase family. FAD serves as cofactor.

Its subcellular location is the mitochondrion outer membrane. It carries out the reaction 2 Fe(III)-[cytochrome b5] + NADH = 2 Fe(II)-[cytochrome b5] + NAD(+) + H(+). May mediate the reduction of outer membrane cytochrome b5. This chain is NADH-cytochrome b5 reductase 2 (MCR1), found in Mycosarcoma maydis (Corn smut fungus).